Consider the following 276-residue polypeptide: Undecaprenyl-diphosphatase (276 aa).

The next 8 membrane-spanning stretches (helical) occupy residues 6–26 (IEILKVIFLGIVEGITEWLPI), 49–69 (EMFFVVIQLGAILAVVVMFWN), 89–109 (FSLWFKVAVACVPSAIMGILF), 117–137 (LHTPVVIAIMLILYGVLFIVI), 151–171 (LADISYKTALMIGVFQVLSLI), 181–201 (IIGALLIGVSRVAAAEFTFFL), 224–244 (AELLTLVIGMAVAFAVSVFVI), and 256–276 (FKVFGWYRIVLGILVLLITAI).

This sequence belongs to the UppP family.

Its subcellular location is the cell membrane. It carries out the reaction di-trans,octa-cis-undecaprenyl diphosphate + H2O = di-trans,octa-cis-undecaprenyl phosphate + phosphate + H(+). In terms of biological role, catalyzes the dephosphorylation of undecaprenyl diphosphate (UPP). Confers resistance to bacitracin. The sequence is that of Undecaprenyl-diphosphatase from Enterococcus faecalis (Streptococcus faecalis).